A 167-amino-acid chain; its full sequence is UPF0114 protein in repA1-repA2 intergenic region (167 aa).

3 helical membrane passes run 15-35 (LMFPVNIGLSFGFILLTLKFF), 53-73 (LVLIVLSLIDIALVGGLLVMV), and 136-156 (IILCVIIHLTFVLSAFGMAYI).

This sequence belongs to the UPF0114 family.

The protein resides in the cell membrane. The polypeptide is UPF0114 protein in repA1-repA2 intergenic region (Buchnera aphidicola subsp. Pterocomma populeum).